Here is a 188-residue protein sequence, read N- to C-terminus: Ribosome-recycling factor (188 aa).

Belongs to the RRF family.

The protein localises to the cytoplasm. In terms of biological role, responsible for the release of ribosomes from messenger RNA at the termination of protein biosynthesis. May increase the efficiency of translation by recycling ribosomes from one round of translation to another. This chain is Ribosome-recycling factor, found in Granulibacter bethesdensis (strain ATCC BAA-1260 / CGDNIH1).